The following is a 167-amino-acid chain: Transcription factor E (167 aa).

One can recognise an HTH TFE/IIEalpha-type domain in the interval 8 to 90; that stretch reads NDKVIRGYLI…LWHLDFSDVE (83 aa).

It belongs to the TFE family. In terms of assembly, monomer. Interaction with RNA polymerase subunits RpoF and RpoE is necessary for Tfe stimulatory transcription activity. Able to interact with Tbp and RNA polymerase in the absence of DNA promoter. Interacts both with the preinitiation and elongation complexes.

In terms of biological role, transcription factor that plays a role in the activation of archaeal genes transcribed by RNA polymerase. Facilitates transcription initiation by enhancing TATA-box recognition by TATA-box-binding protein (Tbp), and transcription factor B (Tfb) and RNA polymerase recruitment. Not absolutely required for transcription in vitro, but particularly important in cases where Tbp or Tfb function is not optimal. It dynamically alters the nucleic acid-binding properties of RNA polymerases by stabilizing the initiation complex and destabilizing elongation complexes. Seems to translocate with the RNA polymerase following initiation and acts by binding to the non template strand of the transcription bubble in elongation complexes. This chain is Transcription factor E, found in Methanosarcina acetivorans (strain ATCC 35395 / DSM 2834 / JCM 12185 / C2A).